Consider the following 266-residue polypeptide: uncharacterized protein (266 aa).

A helical transmembrane segment spans residues 13-33; that stretch reads IIGLMLIIFAGILFYAYILQH.

Belongs to the LicD transferase family.

The protein localises to the membrane. This is an uncharacterized protein from Rickettsia prowazekii (strain Madrid E).